A 345-amino-acid chain; its full sequence is Probable galacturonosyltransferase-like 3 (345 aa).

The Cytoplasmic portion of the chain corresponds to 1-7; sequence MSSLRLR. The helical; Signal-anchor for type II membrane protein transmembrane segment at 8 to 28 threads the bilayer; that stretch reads LCLLLLLPITISCVTVTLTDL. Over 29-345 the chain is Lumenal; sequence PAFREAPAFR…FRYSPLISDS (317 aa). A glycan (N-linked (GlcNAc...) asparagine) is linked at Asn-197.

Belongs to the glycosyltransferase 8 family.

It is found in the golgi apparatus membrane. Its pathway is glycan metabolism; pectin biosynthesis. In terms of biological role, may be involved in pectin and/or xylans biosynthesis in cell walls. The protein is Probable galacturonosyltransferase-like 3 (GATL3) of Arabidopsis thaliana (Mouse-ear cress).